The chain runs to 929 residues: Patatin-like phospholipase domain-containing protein CNE02340 (929 aa).

Positions 37 to 85 (QPLDGDSSPLSPRSFSLPPESPQLSTASVKAPPPTWKYGPDNGTLRSGR) are disordered. The segment covering 43–54 (SSPLSPRSFSLP) has biased composition (low complexity). The chain crosses the membrane as a helical span at residues 126 to 146 (WPLLFFIFFIIYLEFSAYVIT). The 193-residue stretch at 301-493 (LCLSGGASFG…REDIPLGSLH (193 aa)) folds into the PNPLA domain. The GXSXG signature appears at 332–336 (GTSAG). Serine 334 serves as the catalytic Nucleophile. Aspartate 480 acts as the Proton acceptor in catalysis. Disordered stretches follow at residues 644–765 (ALSH…NFGD), 778–806 (LSSP…QRFR), and 818–929 (VSES…QDGA). 2 stretches are compositionally biased toward polar residues: residues 652–664 (NDPA…TNPE) and 745–764 (PTHS…SNFG). The span at 779 to 806 (SSPFRSIRSNTSSSSNNVQSPSSSQRFR) shows a compositional bias: low complexity. Residues 856–878 (VESHSDRSEDEMLHSGANVKEEY) are compositionally biased toward basic and acidic residues.

The protein belongs to the PLPL family.

It localises to the membrane. Probable lipid hydrolase. This chain is Patatin-like phospholipase domain-containing protein CNE02340, found in Cryptococcus neoformans var. neoformans serotype D (strain JEC21 / ATCC MYA-565) (Filobasidiella neoformans).